Here is a 424-residue protein sequence, read N- to C-terminus: Zygote arrest protein 1 (424 aa).

Disordered stretches follow at residues 125–175 (RTLQ…PMRF) and 196–313 (GPGP…SPEL). Gly residues predominate over residues 141–150 (GAEGTTGGGS). A compositionally biased stretch (basic and acidic residues) spans 289-298 (RARDGGDGRE). Residues 326-409 (KYGYYHCKDC…RQDLCGRCKG (84 aa)) form a 3CxxC-type zinc finger.

This sequence belongs to the ZAR1 family. In terms of assembly, interacts with YBX2. Ubiquitinated and degradaded by the proteasome during oocyte meiotic maturation, leading to MARDO (mitochondria-associated ribonucleoprotein domain) membraneless compartment dissolution. Ovary and testis.

The protein localises to the cytoplasm. It localises to the cytoplasmic ribonucleoprotein granule. MRNA-binding protein that mediates formation of MARDO (mitochondria-associated ribonucleoprotein domain), a membraneless compartment that stores maternal mRNAs in oocytes. MARDO assembly around mitochondria is directed by an increase in mitochondrial membrane potential during oocyte growth. Promotes formation of MARDO phase-separated membraneless compartment by undergoing liquid-liquid phase separation upon binding to maternal mRNAs. Binds to the 3'-UTR of maternal mRNAs. Maternal mRNAs stored in the MARDO are translationally repressed. Essential for female fertility and oocyte-to-embryo transition by coordinating maternal mRNA storage, translation and degradation. This is Zygote arrest protein 1 from Homo sapiens (Human).